The chain runs to 330 residues: Diacylglycerol acyltransferase/mycolyltransferase Ag85B (330 aa).

The signal sequence occupies residues 1–40; it reads MTDLSEKVRAWGRRLLVGAAAAVTLPGLIGLAGGAATANA. Residue 82 to 83 coordinates substrate; sequence LR. The tract at residues 98–108 is fibronectin-binding; sequence FEWYYQSGLSV. Cysteines 127 and 132 form a disulfide. 2 residues coordinate substrate: Ser-166 and Asp-194. Residue Ser-166 is the Nucleophile of the active site. The active site involves Glu-270. Residues 272-275, Lys-279, and 302-304 each bind substrate; these read FVRS and HSW. His-302 is an active-site residue.

This sequence belongs to the mycobacterial A85 antigen family.

The protein localises to the secreted. The enzyme catalyses 2 alpha,alpha'-trehalose 6-mycolate = alpha,alpha'-trehalose 6,6'-bismycolate + alpha,alpha-trehalose. It catalyses the reaction an acyl-CoA + a 1,2-diacyl-sn-glycerol = a triacyl-sn-glycerol + CoA. Functionally, the antigen 85 proteins (FbpA, FbpB, FbpC) are responsible for the high affinity of mycobacteria for fibronectin, a large adhesive glycoprotein, which facilitates the attachment of M.tuberculosis to murine alveolar macrophages (AMs). They also help to maintain the integrity of the cell wall by catalyzing the transfer of mycolic acids to cell wall arabinogalactan and through the synthesis of alpha,alpha-trehalose dimycolate (TDM, cord factor). They catalyze the transfer of a mycoloyl residue from one molecule of alpha,alpha-trehalose monomycolate (TMM) to another TMM, leading to the formation of TDM. This chain is Diacylglycerol acyltransferase/mycolyltransferase Ag85B (fbpB), found in Mycobacterium avium.